A 538-amino-acid polypeptide reads, in one-letter code: Protein NRT1/ PTR FAMILY 5.11 (538 aa).

2 helical membrane passes run 44–64 and 74–94; these read FAYF…LGES and AWTG…DSYL. T99 bears the Phosphothreonine mark. 10 helical membrane passes run 100 to 120, 134 to 154, 175 to 194, 204 to 224, 308 to 328, 342 to 362, 389 to 409, 424 to 444, 463 to 483, and 507 to 527; these read IIIS…STMI, TIFF…NPCI, SFFN…TRLV, WSLG…LFLL, IPIW…PTFF, GLLV…VVFI, IGTG…VETK, VWWL…TMVG, ALNL…ISVI, and YFYW…LWFA.

This sequence belongs to the major facilitator superfamily. Proton-dependent oligopeptide transporter (POT/PTR) (TC 2.A.17) family. In terms of tissue distribution, expressed in shoots and roots.

Its subcellular location is the membrane. This chain is Protein NRT1/ PTR FAMILY 5.11 (NPF5.11), found in Arabidopsis thaliana (Mouse-ear cress).